Here is a 622-residue protein sequence, read N- to C-terminus: Chaperone protein HscA homolog (622 aa).

The protein belongs to the heat shock protein 70 family.

Functionally, chaperone involved in the maturation of iron-sulfur cluster-containing proteins. Has a low intrinsic ATPase activity which is markedly stimulated by HscB. The chain is Chaperone protein HscA homolog from Burkholderia cenocepacia (strain HI2424).